Consider the following 1141-residue polypeptide: Serine-aspartate repeat-containing protein E (1141 aa).

Positions 1–52 (MINRDNKKAITKKGMISNRLNKFSIRKYTVGTASILVGTTLIFGLGNQEAKA) are cleaved as a signal peptide. Residues 23-34 (FSIRKYTVGTAS) carry the YSIRK-G/S signaling motif motif. The ligand binding A region stretch occupies residues 53–601 (AENTSTENAK…GDGTVKPEEK (549 aa)). The interval 54 to 248 (ENTSTENAKQ…RSTKPVATAP (195 aa)) is disordered. Residues 61 to 75 (AKQDDATTSDNKEVV) are compositionally biased toward basic and acidic residues. The span at 77–90 (ETENNSTTENDSTN) shows a compositional bias: low complexity. The segment covering 92–108 (IKKETNTDSQPEAKEES) has biased composition (basic and acidic residues). A compositionally biased stretch (low complexity) spans 109–126 (TTSSTQQQQNNVTATTET). Residues 130-145 (NIEKENVKPSTDKTAT) show a composition bias toward basic and acidic residues. Residues 159–207 (NYTNNDVTTKPSTSEIQTKPTTPQESTNIENSQPQPTPSKVDNQVTDAT) show a composition bias toward polar residues. The span at 216 to 241 (SKEELKNNPEKLKELVRNDNNTDRST) shows a compositional bias: basic and acidic residues. 3 CNA-B domains span residues 602 to 714 (LYKI…YKEP), 715 to 824 (KYNL…YKTP), and 825 to 935 (KYSL…EEDT). A disordered region spans residues 899–1117 (VTNTTEDDKD…GSENNGSNNA (219 aa)). Acidic residues-rich tracts occupy residues 903–913 (TEDDKDADGGE) and 930–1080 (YFEE…DSDS). An LPXTG sorting signal motif is present at residues 1104-1108 (LPETG). Residue Thr-1107 is modified to Pentaglycyl murein peptidoglycan amidated threonine. Residues 1108–1141 (GSENNGSNNATLFGGLFAALGSLLLFGRRKKQNK) constitute a propeptide, removed by sortase.

It belongs to the serine-aspartate repeat-containing protein (SDr) family. In terms of assembly, interacts with host complement factor H/CFAH (via C-terminus). Interacts with host complement regulator C4BPA.

Its subcellular location is the secreted. It is found in the cell wall. Functionally, cell surface-associated calcium-binding protein which plays an important role in adhesion and pathogenesis. Contributes to the resistance to killing by innate immune components in blood and thus attenuates bacterial clearance by interacting with host complement factor H/CFAH and modulating its activity. Also inhibits bacterial opsonization and killing by interacting with host complement regulator C4BPA and thus inhibiting classical complement pathway activation. The chain is Serine-aspartate repeat-containing protein E (sdrE) from Staphylococcus aureus (strain N315).